Reading from the N-terminus, the 1374-residue chain is Major capsid protein (1374 aa).

It belongs to the herpesviridae major capsid protein family. As to quaternary structure, homomultimer. Makes the hexons and eleven out of twelve pentons. Interacts with triplex proteins 1/TRX1 and 2/TRX2; adjacent capsomers are linked together in groups of three by triplexes, heterotrimeric complexes composed of one molecule of TRX1 and two molecules of TRX2. Interacts with scaffold protein; this interaction allows efficient MCP transport to the host nucleus. Interacts with capsid vertex component 2/CVC2. Interacts with the small capsomere-interacting protein/SCP.

The protein localises to the virion. It localises to the host nucleus. Its function is as follows. Self-assembles to form an icosahedral capsid with a T=16 symmetry, about 200 nm in diameter, and consisting of 150 hexons and 12 pentons (total of 162 capsomers). Hexons form the edges and faces of the capsid and are each composed of six MCP molecules. In contrast, one penton is found at each of the 12 vertices. Eleven of the pentons are MCP pentamers, while the last vertex is occupied by the portal complex. The capsid is surrounded by a layer of proteinaceous material designated the tegument which, in turn, is enclosed in an envelope of host cell-derived lipids containing virus-encoded glycoproteins. The polypeptide is Major capsid protein (Homo sapiens (Human)).